The primary structure comprises 231 residues: Claudin-10 (231 aa).

The helical transmembrane segment at 1–21 (MASTASEIIAFMVSISGWVLV) threads the bilayer. Topologically, residues 22–80 (SSTLPTDYWKVSTIDGTVITTATYWANLWKTCVTDSTGVSNCKDFPSMLALDGYIQACR) are extracellular. The helical transmembrane segment at 81-101 (GLMIAAVSLGFFGSIFALIGM) threads the bilayer. The Cytoplasmic portion of the chain corresponds to 102–115 (KCTKVGGSDKAKAK). The helical transmembrane segment at 116-136 (IACLAGIVFILSGLCSMTGCS) threads the bilayer. Residues 137 to 160 (LYANKITTEFFDPLFVEQKYELGA) lie on the Extracellular side of the membrane. The chain crosses the membrane as a helical span at residues 161-181 (ALFIGWAGASLCLIGGVIFCF). The Cytoplasmic portion of the chain corresponds to 182–231 (SISDNNKAPRMGYTYNGATSVMSSRTKYHGREGDLKTPNPSKQFDKNAYV).

This sequence belongs to the claudin family. As to quaternary structure, can form homodimers both in trans (interaction between CLDN10 molecules in opposing membranes) and in cis (interaction between CLDN10 molecules within one membrane). Interacts with CLDN19.

The protein localises to the cell junction. The protein resides in the tight junction. It is found in the cell membrane. It carries out the reaction Na(+)(in) = Na(+)(out). The catalysed reaction is Li(+)(in) = Li(+)(out). It catalyses the reaction K(+)(in) = K(+)(out). The enzyme catalyses Rb(+)(in) = Rb(+)(out). It carries out the reaction Cs(+)(in) = Cs(+)(out). The catalysed reaction is NH4(+)(in) = NH4(+)(out). It catalyses the reaction methylamine(out) = methylamine(in). The enzyme catalyses Mg(2+)(in) = Mg(2+)(out). It carries out the reaction Ca(2+)(in) = Ca(2+)(out). The catalysed reaction is Sr(2+)(in) = Sr(2+)(out). It catalyses the reaction chloride(in) = chloride(out). The enzyme catalyses nitrate(in) = nitrate(out). Functionally, forms paracellular channels: polymerizes in tight junction strands with cation- and anion-selective channels through the strands, conveying epithelial permeability in a process known as paracellular tight junction permeability. In sweat glands and in the thick ascending limb (TAL) of Henle's loop in kidney, it controls paracellular sodium permeability which is essential for proper sweat production and renal function. In renal proximal tubules, it conveys selective chloride over hydrogencarbonate anion permeability which is required for renal chloride reabsorption and salt homeostasis. The sequence is that of Claudin-10 (CLDN10) from Bos taurus (Bovine).